Reading from the N-terminus, the 856-residue chain is V-type proton ATPase 116 kDa subunit a 2 (856 aa).

Residues 1–393 (MGSLFRSETM…DAYGVGSYRE (393 aa)) lie on the Cytoplasmic side of the membrane. A helical transmembrane segment spans residues 394–412 (VNPALFTIITFPFLFAVMF). Over 413 to 414 (GD) the chain is Vacuolar. The helical transmembrane segment at 415 to 431 (FGHGFVMFLFALLLVLN) threads the bilayer. Topologically, residues 432–445 (ENHPRLNQSQEIMR) are cytoplasmic. A helical transmembrane segment spans residues 446 to 475 (MFFNGRYILLLMGLFSVYTGLIYNDCFSKS). Topologically, residues 476–549 (VNLFGSGWNV…ATNRLTFLNS (74 aa)) are vacuolar. 2 N-linked (GlcNAc...) asparagine glycosylation sites follow: asparagine 484 and asparagine 505. The helical transmembrane segment at 550 to 569 (FKMKMSVILGIIHMTFGVIL) threads the bilayer. Residues 570–587 (GIFNHLHFRKKFNIYLVS) lie on the Cytoplasmic side of the membrane. A helical transmembrane segment spans residues 588–608 (IPELLFMLCIFGYLIFMIFYK). Over 609 to 651 (WLVFSAETSRVAPSILIEFINMFLFPASKTSGLYTGQEYVQRV) the chain is Vacuolar. The helical transmembrane segment at 652-671 (LLVVTALSVPVLFLGKPLFL) threads the bilayer. Topologically, residues 672-739 (LWLHNGRSCF…EILMTQVIHS (68 aa)) are cytoplasmic. A phosphoserine mark is found at serine 695 and serine 700. Residues 740–764 (IEYCLGCISNTASYLRLWALSLAHA) form a helical membrane-spanning segment. Over 765–785 (QLSDVLWAMLMRVGLRVDTTY) the chain is Vacuolar. A helical membrane pass occupies residues 786-824 (GVLLLLPVIALFAVLTIFILLIMEGLSAFLHAIRLHWVE). Over 825-856 (FQNKFYVGAGTKFVPFSFSLLSSKFNNDDSVA) the chain is Cytoplasmic.

It belongs to the V-ATPase 116 kDa subunit family. V-ATPase is a heteromultimeric enzyme made up of two complexes: the ATP-hydrolytic V1 complex and the proton translocation V0 complex. The V1 complex consists of three catalytic AB heterodimers that form a heterohexamer, three peripheral stalks each consisting of EG heterodimers, one central rotor including subunits D and F, and the regulatory subunits C and H. The proton translocation complex V0 consists of the proton transport subunit a, a ring of proteolipid subunits c9c'', rotary subunit d, subunits e and f, and the accessory subunits ATP6AP1/Ac45 and ATP6AP2/PRR. Directly interacts with PSCD2 through its N-terminal cytosolic tail in an intra-endosomal acidification-dependent manner. Disruption of this interaction results in the inhibition of endocytosis. Interacts with SPAAR.

The protein localises to the cell membrane. It is found in the endosome membrane. In terms of biological role, subunit of the V0 complex of vacuolar(H+)-ATPase (V-ATPase), a multisubunit enzyme composed of a peripheral complex (V1) that hydrolyzes ATP and a membrane integral complex (V0) that translocates protons. V-ATPase is responsible for acidifying and maintaining the pH of intracellular compartments and in some cell types, is targeted to the plasma membrane, where it is responsible for acidifying the extracellular environment. Essential component of the endosomal pH-sensing machinery. May play a role in maintaining the Golgi functions, such as glycosylation maturation, by controlling the Golgi pH. In aerobic conditions, involved in intracellular iron homeostasis, thus triggering the activity of Fe(2+) prolyl hydroxylase (PHD) enzymes, and leading to HIF1A hydroxylation and subsequent proteasomal degradation. This is V-type proton ATPase 116 kDa subunit a 2 (ATP6V0A2) from Homo sapiens (Human).